A 1046-amino-acid chain; its full sequence is Toluene efflux pump membrane transporter TtgE (1046 aa).

The next 12 helical transmembrane spans lie at 10-30 (IFAWVLAIIAMLAGALSLTKM), 339-359 (SVVHTILEAVVLVFLVMFLFL), 370-390 (LAVPVVLLAAFALLPYFGISI), 392-412 (VLTMYAMVLAIGLLVDDAIVV), 440-460 (GALVGIGMVLSAVFVPMAFFG), 470-490 (FAVTIVICMSLSVLVALIFTP), 542-562 (LIFALITAGTGYLFTQIPKAF), 871-891 (APMLYALTVLIVFLCLAALYE), 895-915 (VPMSVILVVPLGIFGAVLATL), 927-947 (VGLMTTVGLSAKNAILIIEFA), 973-993 (IIMTSLAFTFGVLPMARATGA), and 1008-1028 (GMITATVLAVFFVPLFYVVVV).

This sequence belongs to the resistance-nodulation-cell division (RND) (TC 2.A.6) family.

The protein resides in the cell inner membrane. Functionally, the inner membrane transporter component of an inducible organic solvent efflux pump. Involved in export of toluene and styrene but not of m-xylene, propylbenzene or ethylbenzene. Is not involved in antibiotic or AMP efflux. The sequence is that of Toluene efflux pump membrane transporter TtgE (ttgE) from Pseudomonas putida (strain DOT-T1E).